The following is a 450-amino-acid chain: MSRKYFGTDGVRGKVGEFPITPDFAMKLGWAAGTVLASTGTKEVLIGKDTRSSGYMLESAMEAGFSAAGVNVALIGPMPTPAVAYLASTFRADAGVVISASHNPFYDNGIKFFSNSGTKLNDAQELEIEALLEKALNQNAMQCVASEKLGKVRRIDDAAGRYIEFCKGTFPNHLSLAGLKIVIDSAHGAAYHIAPNVYRELGAEVISINDKPNGVNINDHCGATHLDSLQTAVMVHEADLGIALDGDADRVMFVDHNGHVVDGDEILFILAQAAHSKGEMTGGVVGTLMSNLGLELALKQMDIPFVRAKVGDRYVVEQLKRTGWQLGGEGSGHILSLQHASTGDGIVASLQVLKAVLESQKSLSEIKAGMTKLPQVLINVRLATADADSILATTSVKQAVIKAEEFLGDQGRVLLRKSGTEPLIRVMVESTDNIMTQTQAEYIADAVRAA.

Ser-101 (phosphoserine intermediate) is an active-site residue. Mg(2+)-binding residues include Ser-101, Asp-245, Asp-247, and Asp-249. Residue Ser-101 is modified to Phosphoserine.

The protein belongs to the phosphohexose mutase family. Mg(2+) is required as a cofactor. In terms of processing, activated by phosphorylation.

The catalysed reaction is alpha-D-glucosamine 1-phosphate = D-glucosamine 6-phosphate. Its function is as follows. Catalyzes the conversion of glucosamine-6-phosphate to glucosamine-1-phosphate. This Shewanella baltica (strain OS185) protein is Phosphoglucosamine mutase 2.